A 1320-amino-acid chain; its full sequence is Myopalladin (1320 aa).

The segment at 1–522 (MQDDSIEAST…FTCTASNKYG (522 aa)) is interaction with CARP. Disordered stretches follow at residues 19-68 (SYLA…AFLS), 84-145 (NYDP…SETQ), and 165-271 (FKSH…PPRF). Composition is skewed to basic and acidic residues over residues 23-35 (ETRHRGNNERSRA) and 87-106 (PLEKADETQARKRLSPDQMK). Position 101 is a phosphoserine (Ser101). The span at 107 to 130 (HSPNLSFEPNFCQDNPRSPTSSKE) shows a compositional bias: polar residues. At Ser131 the chain carries Phosphoserine. Basic residues predominate over residues 168–182 (HSSKRIRPRACKNHK). Over residues 186–201 (ESQNKVMQENSSSFSD) the composition is skewed to polar residues. Residues 218–239 (DTRDNEVNHALEQQEAKRREAE) show a composition bias toward basic and acidic residues. Residues 219–248 (TRDNEVNHALEQQEAKRREAEQAASEAAGG) are a coiled coil. Positions 240–258 (QAASEAAGGDTTPGSSPSS) are enriched in low complexity. Thr251 is modified (phosphothreonine). Ig-like domains follow at residues 269–359 (PRFT…IYIE) and 435–531 (PVFT…AQLH). Intrachain disulfides connect Cys290–Cys341 and Cys456–Cys515. The interval 554-655 (AAIEPQPSPP…VKEPPPVLAK (102 aa)) is disordered. Positions 559 to 575 (QPSPPHSEPPSVEQPPK) are enriched in pro residues. Ser644 carries the post-translational modification Phosphoserine. The interaction with NEB stretch occupies residues 649 to 677 (PPPVLAKPKLDSTQLQQLHNQVLLEQHQL). Ser759 bears the Phosphoserine mark. A disordered region spans residues 763–805 (LLVSHPSVQTKSPGGLSIQNEPLPPGPTEPTPPPFTFSIPSGN). Polar residues predominate over residues 768 to 782 (PSVQTKSPGGLSIQN). A compositionally biased stretch (pro residues) spans 784-797 (PLPPGPTEPTPPPF). A phosphoserine mark is found at Ser813, Ser818, Ser867, Ser907, and Ser928. The tract at residues 844 to 876 (NAMGLPRSAPSMPSQGLAKKNTKSPQPVNDDNI) is disordered. Ig-like domains are found at residues 945 to 1029 (PIFD…GRIS), 1073 to 1162 (PHFL…LELS), and 1172 to 1262 (PVIL…ARLD). The tract at residues 945-1320 (PIFDKRLKHF…SRSVVESDEL (376 aa)) is interaction with ACTN. Cys1094 and Cys1146 form a disulfide bridge.

Belongs to the myotilin/palladin family. In terms of assembly, interacts with TTN/titin, NEB, NEBL, ACTN2 and CARP. As to expression, expressed in adult skeletal muscle and fetal heart.

It localises to the cytoplasm. The protein localises to the nucleus. Its subcellular location is the myofibril. The protein resides in the sarcomere. It is found in the z line. Functionally, component of the sarcomere that tethers together nebulin (skeletal muscle) and nebulette (cardiac muscle) to alpha-actinin, at the Z lines. The chain is Myopalladin (MYPN) from Homo sapiens (Human).